The sequence spans 193 residues: Xanthine phosphoribosyltransferase (193 aa).

Xanthine is bound by residues leucine 20 and asparagine 27. 128–132 (ASGGT) lines the 5-phospho-alpha-D-ribose 1-diphosphate pocket. Residue lysine 156 participates in xanthine binding.

It belongs to the purine/pyrimidine phosphoribosyltransferase family. Xpt subfamily. In terms of assembly, homodimer.

The protein resides in the cytoplasm. The catalysed reaction is XMP + diphosphate = xanthine + 5-phospho-alpha-D-ribose 1-diphosphate. The protein operates within purine metabolism; XMP biosynthesis via salvage pathway; XMP from xanthine: step 1/1. Its function is as follows. Converts the preformed base xanthine, a product of nucleic acid breakdown, to xanthosine 5'-monophosphate (XMP), so it can be reused for RNA or DNA synthesis. This Deinococcus deserti (strain DSM 17065 / CIP 109153 / LMG 22923 / VCD115) protein is Xanthine phosphoribosyltransferase.